A 144-amino-acid polypeptide reads, in one-letter code: Large ribosomal subunit protein uL15 (144 aa).

Residues 1-54 (MRLNTLSPAAGSKHAPKRVGRGMGSGLGKTAGRGHKGQKSRSGGGVRPGFEGGQ) are disordered. Gly residues-rich tracts occupy residues 21-31 (RGMGSGLGKTA) and 42-52 (SGGGVRPGFEG).

The protein belongs to the universal ribosomal protein uL15 family. Part of the 50S ribosomal subunit.

Binds to the 23S rRNA. This is Large ribosomal subunit protein uL15 from Shewanella baltica (strain OS223).